Consider the following 1396-residue polypeptide: DNA-directed RNA polymerase subunit beta' (1396 aa).

Residues Cys70, Cys72, Cys85, and Cys88 each coordinate Zn(2+). 3 residues coordinate Mg(2+): Asp460, Asp462, and Asp464. 4 residues coordinate Zn(2+): Cys807, Cys881, Cys888, and Cys891. Residues 1361-1378 (EPEEIEEPVPEDLEDETA) are compositionally biased toward acidic residues. Residues 1361–1396 (EPEEIEEPVPEDLEDETAGADSAQAASEESVAEGKD) form a disordered region. Low complexity predominate over residues 1379–1389 (GADSAQAASEE).

The protein belongs to the RNA polymerase beta' chain family. The RNAP catalytic core consists of 2 alpha, 1 beta, 1 beta' and 1 omega subunit. When a sigma factor is associated with the core the holoenzyme is formed, which can initiate transcription. Requires Mg(2+) as cofactor. Zn(2+) serves as cofactor.

The catalysed reaction is RNA(n) + a ribonucleoside 5'-triphosphate = RNA(n+1) + diphosphate. DNA-dependent RNA polymerase catalyzes the transcription of DNA into RNA using the four ribonucleoside triphosphates as substrates. This is DNA-directed RNA polymerase subunit beta' from Syntrophotalea carbinolica (strain DSM 2380 / NBRC 103641 / GraBd1) (Pelobacter carbinolicus).